The following is a 1072-amino-acid chain: Serine/threonine-protein kinase 11-interacting protein (1072 aa).

8 LRR repeats span residues 109-130, 132-152, 164-185, 187-209, 210-231, 233-254, 255-276, and 280-301; these read SLRQ…RGIY, QLES…LSAC, ALLS…LRLL, ALRF…MDLC, ELYH…GPSG, ALGT…EQLK, NLRH…APLW, and ELRK…RAAT. A disordered region spans residues 333–366; sequence DSSGLGPVIQPLSWPVGSTTETSGGPELSDSLSS. S388, S390, and S393 each carry phosphoserine. The span at 441-454 shows a compositional bias: polar residues; sequence MGSSPLSTTKTPAL. 2 disordered regions span residues 441–522 and 741–762; these read MGSS…EQKA and RPDG…SLSP. 2 stretches are compositionally biased toward basic and acidic residues: residues 478-492 and 501-510; these read KESP…RVEP and EQDKEEGSRE. A phosphoserine mark is found at S757, S761, and S763. Residues 967 to 993 are disordered; it reads HAESPLPVVSDETSEQPASLGPGPSLQ.

It belongs to the STK11IP family. In terms of assembly, found in a ternary complex composed of STK11/LKB1, STK11IP and SMAD4. Interacts with SMAD4. Interacts with STK11/LKB1.

It localises to the cytoplasm. In terms of biological role, may regulate STK11/LKB1 function by controlling its subcellular localization. This Mus musculus (Mouse) protein is Serine/threonine-protein kinase 11-interacting protein (Stk11ip).